Here is a 376-residue protein sequence, read N- to C-terminus: WD repeat-containing protein 86 (376 aa).

8 WD repeats span residues 13-52, 55-94, 95-132, 135-188, 191-232, 234-272, 274-310, and 313-350; these read DHRGGINWLSLSPDGQRLLTGSEDGTARLWSTADGQCCAL, GHESYVTFCQLEDEAAFTCSADCTIRRWDVLTGQCLQVYR, GHTSIVNRILVANNQLFSSSYDRTARVWSVDKGQMSRE, GHRN…CHQT, GHTG…RVFR, HRGSVICLELVNRLVYSGSADRTVKCWLADTGECVRTFT, HRRNVSALKYHAGTLFTGSGDACARAFDAQSGELRRV, and GHTFIINCIQVHGQVLYTASHDGALRLWDVRGLRGAPR.

The chain is WD repeat-containing protein 86 (WDR86) from Homo sapiens (Human).